A 73-amino-acid chain; its full sequence is DNA-directed RNA polymerase subunit epsilon (73 aa).

This sequence belongs to the RNA polymerase subunit epsilon family. RNAP is composed of a core of 2 alpha, a beta and a beta' subunit. The core is associated with a delta subunit, and at least one of epsilon or omega. When a sigma factor is associated with the core the holoenzyme is formed, which can initiate transcription.

The enzyme catalyses RNA(n) + a ribonucleoside 5'-triphosphate = RNA(n+1) + diphosphate. A non-essential component of RNA polymerase (RNAP). This chain is DNA-directed RNA polymerase subunit epsilon, found in Lactobacillus acidophilus (strain ATCC 700396 / NCK56 / N2 / NCFM).